The following is a 176-amino-acid chain: MTTIVSVRRNGQVVIGGDGQATLGNTVMKGNVRKVRRLYHDRVIAGFAGGTADAFTLFELFERKLELHQGHLVKAAVELAKDWRTDRMLRRLEALLAVADENASLIITGNGDVVQPENDLIAIGSGGPYAQAAARALLENTELGARDIVEKSLGIAGDICIYTNQFHTIEELASKA.

Residue T2 is part of the active site. 3 residues coordinate Na(+): G157, C160, and T163.

This sequence belongs to the peptidase T1B family. HslV subfamily. As to quaternary structure, a double ring-shaped homohexamer of HslV is capped on each side by a ring-shaped HslU homohexamer. The assembly of the HslU/HslV complex is dependent on binding of ATP.

It localises to the cytoplasm. It carries out the reaction ATP-dependent cleavage of peptide bonds with broad specificity.. Allosterically activated by HslU binding. Protease subunit of a proteasome-like degradation complex believed to be a general protein degrading machinery. In Pectobacterium atrosepticum (strain SCRI 1043 / ATCC BAA-672) (Erwinia carotovora subsp. atroseptica), this protein is ATP-dependent protease subunit HslV.